An 802-amino-acid chain; its full sequence is DNA mismatch repair protein MutS (802 aa).

617 to 624 serves as a coordination point for ATP; it reads GPNMGGKS.

It belongs to the DNA mismatch repair MutS family.

Functionally, this protein is involved in the repair of mismatches in DNA. It is possible that it carries out the mismatch recognition step. This protein has a weak ATPase activity. The polypeptide is DNA mismatch repair protein MutS (Buchnera aphidicola subsp. Acyrthosiphon pisum (strain 5A)).